Here is a 347-residue protein sequence, read N- to C-terminus: S-adenosylmethionine:tRNA ribosyltransferase-isomerase (347 aa).

This sequence belongs to the QueA family. Monomer.

The protein resides in the cytoplasm. The enzyme catalyses 7-aminomethyl-7-carbaguanosine(34) in tRNA + S-adenosyl-L-methionine = epoxyqueuosine(34) in tRNA + adenine + L-methionine + 2 H(+). It functions in the pathway tRNA modification; tRNA-queuosine biosynthesis. In terms of biological role, transfers and isomerizes the ribose moiety from AdoMet to the 7-aminomethyl group of 7-deazaguanine (preQ1-tRNA) to give epoxyqueuosine (oQ-tRNA). The sequence is that of S-adenosylmethionine:tRNA ribosyltransferase-isomerase from Erythrobacter litoralis (strain HTCC2594).